A 334-amino-acid polypeptide reads, in one-letter code: N-acetyl-gamma-glutamyl-phosphate reductase (334 aa).

Cys154 is a catalytic residue.

Belongs to the NAGSA dehydrogenase family. Type 1 subfamily.

It is found in the cytoplasm. The enzyme catalyses N-acetyl-L-glutamate 5-semialdehyde + phosphate + NADP(+) = N-acetyl-L-glutamyl 5-phosphate + NADPH + H(+). It participates in amino-acid biosynthesis; L-arginine biosynthesis; N(2)-acetyl-L-ornithine from L-glutamate: step 3/4. Its function is as follows. Catalyzes the NADPH-dependent reduction of N-acetyl-5-glutamyl phosphate to yield N-acetyl-L-glutamate 5-semialdehyde. In Vibrio vulnificus (strain YJ016), this protein is N-acetyl-gamma-glutamyl-phosphate reductase.